The chain runs to 932 residues: Lon protease homolog 2, peroxisomal (932 aa).

Residues 11–259 (LALVPLPKGS…RVVELLARQV (249 aa)) enclose the Lon N-terminal domain. A disordered region spans residues 304–340 (TGLTPPGAAGGRNNEDEKETNEVDELQKRLQEAELSP). Residues 328-340 (ELQKRLQEAELSP) show a composition bias toward basic and acidic residues. Residue 486–493 (GPPGTGKT) participates in ATP binding. The Lon proteolytic domain occupies 729–916 (HGRPGVVTGL…WEAIRQVWPG (188 aa)). Active-site residues include S822 and K865. The Microbody targeting signal signature appears at 930-932 (SRL).

The protein belongs to the peptidase S16 family.

Its subcellular location is the peroxisome matrix. The enzyme catalyses Hydrolysis of proteins in presence of ATP.. Its function is as follows. ATP-dependent serine protease that mediates the selective degradation of misfolded and unassembled polypeptides in the peroxisomal matrix. Necessary for type 2 peroxisome targeting signal (PTS2)-containing protein processing and facilitates peroxisome matrix protein import. The chain is Lon protease homolog 2, peroxisomal from Aspergillus fumigatus (strain ATCC MYA-4609 / CBS 101355 / FGSC A1100 / Af293) (Neosartorya fumigata).